A 213-amino-acid chain; its full sequence is uncharacterized protein (213 aa).

S-adenosyl-L-methionine contacts are provided by Gly53, Glu74, and Asp97.

The protein belongs to the methyltransferase superfamily. YrrT family.

In terms of biological role, could be a S-adenosyl-L-methionine-dependent methyltransferase. This is an uncharacterized protein from Bacillus velezensis (strain DSM 23117 / BGSC 10A6 / LMG 26770 / FZB42) (Bacillus amyloliquefaciens subsp. plantarum).